Reading from the N-terminus, the 85-residue chain is ATP synthase subunit c (85 aa).

2 consecutive transmembrane segments (helical) span residues Ile10–Leu30 and Phe53–Phe73.

The protein belongs to the ATPase C chain family. As to quaternary structure, F-type ATPases have 2 components, F(1) - the catalytic core - and F(0) - the membrane proton channel. F(1) has five subunits: alpha(3), beta(3), gamma(1), delta(1), epsilon(1). F(0) has three main subunits: a(1), b(2) and c(10-14). The alpha and beta chains form an alternating ring which encloses part of the gamma chain. F(1) is attached to F(0) by a central stalk formed by the gamma and epsilon chains, while a peripheral stalk is formed by the delta and b chains.

The protein resides in the cell inner membrane. F(1)F(0) ATP synthase produces ATP from ADP in the presence of a proton or sodium gradient. F-type ATPases consist of two structural domains, F(1) containing the extramembraneous catalytic core and F(0) containing the membrane proton channel, linked together by a central stalk and a peripheral stalk. During catalysis, ATP synthesis in the catalytic domain of F(1) is coupled via a rotary mechanism of the central stalk subunits to proton translocation. In terms of biological role, key component of the F(0) channel; it plays a direct role in translocation across the membrane. A homomeric c-ring of between 10-14 subunits forms the central stalk rotor element with the F(1) delta and epsilon subunits. This is ATP synthase subunit c from Pseudomonas aeruginosa (strain LESB58).